The chain runs to 139 residues: ATP synthase epsilon chain, chloroplastic (139 aa).

It belongs to the ATPase epsilon chain family. In terms of assembly, F-type ATPases have 2 components, CF(1) - the catalytic core - and CF(0) - the membrane proton channel. CF(1) has five subunits: alpha(3), beta(3), gamma(1), delta(1), epsilon(1). CF(0) has three main subunits: a, b and c.

Its subcellular location is the plastid. It is found in the chloroplast thylakoid membrane. Functionally, produces ATP from ADP in the presence of a proton gradient across the membrane. The sequence is that of ATP synthase epsilon chain, chloroplastic from Dictyota dichotoma.